Reading from the N-terminus, the 328-residue chain is Phosphate acyltransferase (328 aa).

The protein belongs to the PlsX family. Homodimer. Probably interacts with PlsY.

It localises to the cytoplasm. The enzyme catalyses a fatty acyl-[ACP] + phosphate = an acyl phosphate + holo-[ACP]. Its pathway is lipid metabolism; phospholipid metabolism. Catalyzes the reversible formation of acyl-phosphate (acyl-PO(4)) from acyl-[acyl-carrier-protein] (acyl-ACP). This enzyme utilizes acyl-ACP as fatty acyl donor, but not acyl-CoA. This chain is Phosphate acyltransferase, found in Staphylococcus haemolyticus (strain JCSC1435).